The sequence spans 198 residues: Small ribosomal subunit protein uS2 (198 aa).

The protein belongs to the universal ribosomal protein uS2 family.

This chain is Small ribosomal subunit protein uS2, found in Methanobrevibacter smithii (strain ATCC 35061 / DSM 861 / OCM 144 / PS).